The primary structure comprises 199 residues: Superoxide dismutase [Mn/Fe] (199 aa).

The Fe(3+) site is built by H27, H81, D161, and H165. Residues H27, H81, D161, and H165 each contribute to the Mn(2+) site.

The protein belongs to the iron/manganese superoxide dismutase family. In terms of assembly, homodimer. It depends on Mn(2+) as a cofactor. The cofactor is Fe(3+).

It catalyses the reaction 2 superoxide + 2 H(+) = H2O2 + O2. Functionally, destroys superoxide anion radicals which are normally produced within the cells and which are toxic to biological systems. Catalyzes the dismutation of superoxide anion radicals into O2 and H2O2 by successive reduction and oxidation of the transition metal ion at the active site. Also contributes to the inhibition of lipid oxidation. Manganese-preferring enzyme, less active with iron than with manganese. The protein is Superoxide dismutase [Mn/Fe] (sodA) of Staphylococcus xylosus.